The primary structure comprises 151 residues: Large-conductance mechanosensitive channel (151 aa).

The next 2 helical transmembrane spans lie at V19–L39 and G85–V105.

It belongs to the MscL family. Homopentamer.

The protein localises to the cell inner membrane. Channel that opens in response to stretch forces in the membrane lipid bilayer. May participate in the regulation of osmotic pressure changes within the cell. The sequence is that of Large-conductance mechanosensitive channel from Chlorobaculum parvum (strain DSM 263 / NCIMB 8327) (Chlorobium vibrioforme subsp. thiosulfatophilum).